Reading from the N-terminus, the 172-residue chain is Large ribosomal subunit protein bL17 (172 aa).

Positions 127–172 (KAAKQDRAKRVKGSKKVTGDVAPAVAPVPSAPAETQEEAKAPESAE) are disordered. A compositionally biased stretch (low complexity) spans 147–159 (VAPAVAPVPSAPA). Positions 163 to 172 (EEAKAPESAE) are enriched in basic and acidic residues.

Belongs to the bacterial ribosomal protein bL17 family. Part of the 50S ribosomal subunit. Contacts protein L32.

This Chlorobium luteolum (strain DSM 273 / BCRC 81028 / 2530) (Pelodictyon luteolum) protein is Large ribosomal subunit protein bL17.